Consider the following 112-residue polypeptide: UPF0342 protein SP_1372 (112 aa).

Belongs to the UPF0342 family.

This chain is UPF0342 protein SP_1372, found in Streptococcus pneumoniae serotype 4 (strain ATCC BAA-334 / TIGR4).